Reading from the N-terminus, the 427-residue chain is Histidine--tRNA ligase (427 aa).

It belongs to the class-II aminoacyl-tRNA synthetase family. In terms of assembly, homodimer.

It localises to the cytoplasm. The catalysed reaction is tRNA(His) + L-histidine + ATP = L-histidyl-tRNA(His) + AMP + diphosphate + H(+). The polypeptide is Histidine--tRNA ligase (Chloroherpeton thalassium (strain ATCC 35110 / GB-78)).